We begin with the raw amino-acid sequence, 180 residues long: Bifunctional protein PyrR (180 aa).

Residues 101–113 (VILVDDVLYTGRT) carry the PRPP-binding motif.

This sequence belongs to the purine/pyrimidine phosphoribosyltransferase family. PyrR subfamily. In terms of assembly, homodimer and homohexamer; in equilibrium.

It carries out the reaction UMP + diphosphate = 5-phospho-alpha-D-ribose 1-diphosphate + uracil. In terms of biological role, regulates transcriptional attenuation of the pyrimidine nucleotide (pyr) operon by binding in a uridine-dependent manner to specific sites on pyr mRNA. This disrupts an antiterminator hairpin in the RNA and favors formation of a downstream transcription terminator, leading to a reduced expression of downstream genes. Its function is as follows. Also displays a weak uracil phosphoribosyltransferase activity which is not physiologically significant. The sequence is that of Bifunctional protein PyrR from Bacillus mycoides (strain KBAB4) (Bacillus weihenstephanensis).